Reading from the N-terminus, the 212-residue chain is Thymidylate kinase (212 aa).

Residue 11–18 (GLEGAGKT) coordinates ATP.

This sequence belongs to the thymidylate kinase family.

The catalysed reaction is dTMP + ATP = dTDP + ADP. Its function is as follows. Phosphorylation of dTMP to form dTDP in both de novo and salvage pathways of dTTP synthesis. The sequence is that of Thymidylate kinase from Buchnera aphidicola subsp. Schizaphis graminum (strain Sg).